Here is a 489-residue protein sequence, read N- to C-terminus: Protein LMBR1L (489 aa).

At 1–21 (MEAPDYEVLSVREQLFHERIR) the chain is on the extracellular side. Residues 1–59 (MEAPDYEVLSVREQLFHERIRECIISTLLFATLYILCHIFLTRFKKPAEFTTVDDEDAT) form an interaction with LGB region. The interval 1 to 76 (MEAPDYEVLS…LCTFTLAIAL (76 aa)) is LCN1-binding. Residues 22 to 42 (ECIISTLLFATLYILCHIFLT) form a helical membrane-spanning segment. Topologically, residues 43–66 (RFKKPAEFTTVDDEDATVNKIALE) are cytoplasmic. A helical membrane pass occupies residues 67-87 (LCTFTLAIALGAVLLLPFSII). At 88-114 (SNEVLLSLPRNYYIQWLNGSLIHGLWN) the chain is on the extracellular side. A helical transmembrane segment spans residues 115 to 135 (LVFLFSNLSLIFLMPFAYFFT). Residues 136-154 (ESEGFAGSRKGVLGRVYET) lie on the Cytoplasmic side of the membrane. Residues 155–175 (VVMLMLLTLLVLGMVWVASAI) form a helical membrane-spanning segment. Residues 176 to 196 (VDKNKANRESLYDFWEYYLPY) are Extracellular-facing. Residues 197–217 (LYSCISFLGVLLLLVCTPLGL) traverse the membrane as a helical segment. Over 218–305 (ARMFSVTGKL…NLGYPLAMLC (88 aa)) the chain is Cytoplasmic. The helical transmembrane segment at 306 to 326 (LLVLTGLSVLIVAIHILELLI) threads the bilayer. The Extracellular segment spans residues 327–350 (DEAAMPRGMQGTSLGQVSFSKLGS). Residues 351–371 (FGAVIQVVLIFYLMVSSVVGF) traverse the membrane as a helical segment. At 372–388 (YSSPLFRSLRPRWHDTA) the chain is on the cytoplasmic side. A helical membrane pass occupies residues 389 to 409 (MTQIIGNCVCLLVLSSALPVF). Residues 410–431 (SRTLGLTRFDLLGDFGRFNWLG) are Extracellular-facing. The helical transmembrane segment at 432–452 (NFYIVFLYNAAFAGLTTLCLV) threads the bilayer. The Cytoplasmic portion of the chain corresponds to 453 to 489 (KTFTAAVRAELIRAFGLDRLPLPVSGFPQASRKTQHQ).

Belongs to the LIMR family. Dimer. Can also form higher oligomers. Interacts with LCN1; this interaction mediates the endocytosis of LCN1. Interacts with UBAC2, FAF2, VCP, AMFR, ZNRF3, CTNNB1, LRP6, GSK3A and GSK3B. Interacts with DVL2 and RNF43. Interaction with SCGB1A1 has been observed in PubMed:16423471, but not in PubMed:23964685. Interaction with LGB which mediates the endocytosis of LGB has been observed in PubMed:17991420, but not in PubMed:23964685. As to expression, expressed in testis, pituitary gland, adrenal gland, trachea, placenta, thymus, cerebellum, stomach, mammary gland, spinal cord. A weaker expression is detected in colon, pancreas, and prostate.

The protein resides in the cell membrane. It is found in the endoplasmic reticulum membrane. Its function is as follows. Plays an essential role in lymphocyte development by negatively regulating the canonical Wnt signaling pathway. In association with UBAC2 and E3 ubiquitin-protein ligase AMFR, promotes the ubiquitin-mediated degradation of CTNNB1 and Wnt receptors FZD6 and LRP6. LMBR1L stabilizes the beta-catenin destruction complex that is required for regulating CTNNB1 levels. Acts as a LCN1 receptor and can mediate its endocytosis. This Homo sapiens (Human) protein is Protein LMBR1L (LMBR1L).